The chain runs to 266 residues: Phosphatidylserine decarboxylase proenzyme (266 aa).

Residues aspartate 74, histidine 135, and serine 237 each act as charge relay system; for autoendoproteolytic cleavage activity in the active site. Serine 237 serves as the catalytic Schiff-base intermediate with substrate; via pyruvic acid; for decarboxylase activity. Serine 237 bears the Pyruvic acid (Ser); by autocatalysis mark.

It belongs to the phosphatidylserine decarboxylase family. PSD-B subfamily. Prokaryotic type I sub-subfamily. In terms of assembly, heterodimer of a large membrane-associated beta subunit and a small pyruvoyl-containing alpha subunit. Requires pyruvate as cofactor. Post-translationally, is synthesized initially as an inactive proenzyme. Formation of the active enzyme involves a self-maturation process in which the active site pyruvoyl group is generated from an internal serine residue via an autocatalytic post-translational modification. Two non-identical subunits are generated from the proenzyme in this reaction, and the pyruvate is formed at the N-terminus of the alpha chain, which is derived from the carboxyl end of the proenzyme. The autoendoproteolytic cleavage occurs by a canonical serine protease mechanism, in which the side chain hydroxyl group of the serine supplies its oxygen atom to form the C-terminus of the beta chain, while the remainder of the serine residue undergoes an oxidative deamination to produce ammonia and the pyruvoyl prosthetic group on the alpha chain. During this reaction, the Ser that is part of the protease active site of the proenzyme becomes the pyruvoyl prosthetic group, which constitutes an essential element of the active site of the mature decarboxylase.

Its subcellular location is the cell membrane. The catalysed reaction is a 1,2-diacyl-sn-glycero-3-phospho-L-serine + H(+) = a 1,2-diacyl-sn-glycero-3-phosphoethanolamine + CO2. It participates in phospholipid metabolism; phosphatidylethanolamine biosynthesis; phosphatidylethanolamine from CDP-diacylglycerol: step 2/2. In terms of biological role, catalyzes the formation of phosphatidylethanolamine (PtdEtn) from phosphatidylserine (PtdSer). The sequence is that of Phosphatidylserine decarboxylase proenzyme from Campylobacter jejuni subsp. jejuni serotype O:2 (strain ATCC 700819 / NCTC 11168).